We begin with the raw amino-acid sequence, 195 residues long: Probable DNA-directed RNA polymerase subunit delta (195 aa).

The HTH HARE-type domain occupies 14–83; that stretch reads LSMIEVARAI…GDNKWGLRSW (70 aa). Acidic residues-rich tracts occupy residues 119-138 and 145-195; these read GDED…DSYE and YDDE…GEEE. The tract at residues 119-195 is disordered; sequence GDEDAIDYSD…SDDDAEGEEE (77 aa).

This sequence belongs to the RpoE family. In terms of assembly, RNAP is composed of a core of 2 alpha, a beta and a beta' subunits. The core is associated with a delta subunit and one of several sigma factors.

Participates in both the initiation and recycling phases of transcription. In the presence of the delta subunit, RNAP displays an increased specificity of transcription, a decreased affinity for nucleic acids, and an increased efficiency of RNA synthesis because of enhanced recycling. The chain is Probable DNA-directed RNA polymerase subunit delta from Streptococcus gordonii (strain Challis / ATCC 35105 / BCRC 15272 / CH1 / DL1 / V288).